Consider the following 160-residue polypeptide: Fluoride-specific ion channel FluC (160 aa).

Transmembrane regions (helical) follow at residues 5-25 (LFIS…GLLF), 34-54 (FGTL…LGLF), 67-87 (FLIT…SEVV), and 99-119 (FCVL…GIWI). Na(+) is bound by residues Gly74 and Thr77.

It belongs to the fluoride channel Fluc/FEX (TC 1.A.43) family.

Its subcellular location is the cell inner membrane. It catalyses the reaction fluoride(in) = fluoride(out). Its activity is regulated as follows. Na(+) is not transported, but it plays an essential structural role and its presence is essential for fluoride channel function. Functionally, fluoride-specific ion channel. Important for reducing fluoride concentration in the cell, thus reducing its toxicity. The sequence is that of Fluoride-specific ion channel FluC from Haemophilus influenzae (strain ATCC 51907 / DSM 11121 / KW20 / Rd).